The sequence spans 391 residues: D-xylose 1-dehydrogenase (NADP(+)) (391 aa).

This sequence belongs to the Gfo/Idh/MocA family.

The catalysed reaction is D-xylose + NADP(+) = D-xylono-1,5-lactone + NADPH + H(+). In terms of biological role, NADP-dependent D-xylose dehydrogenase catalyzing the oxydation of D-xylose into D-xylonolactone. Also displays some, albeit lower activity with D-glucose, D-galactose and L-arabinose as substrate. Probably not involved in D-xylose degradation, as it has been shown that H.jecorina assimilates D-xylose via D-xylose reductase and xylitol dehydrogenase, and it is unable to grow on D-xylonic acid as sole carbon source. May play a role in the regeneration of NADP(+) in the presence of D-xylose. The sequence is that of D-xylose 1-dehydrogenase (NADP(+)) from Hypocrea jecorina (strain ATCC 56765 / BCRC 32924 / NRRL 11460 / Rut C-30) (Trichoderma reesei).